The sequence spans 420 residues: 3-oxoacyl-[acyl-carrier-protein] synthase 2 (420 aa).

Residues 13 to 419 (FPNVVVTGIA…GHNVAIAFGC (407 aa)) form the Ketosynthase family 3 (KS3) domain. Active-site for beta-ketoacyl synthase activity residues include C173, H314, and H349.

Belongs to the thiolase-like superfamily. Beta-ketoacyl-ACP synthases family.

It is found in the cytoplasm. The catalysed reaction is an ultra-long-chain di-unsaturated fatty acyl-[ACP] + malonyl-[ACP] + H(+) = a 3-oxo-ultra-long-chain di-unsaturated fatty acyl-[ACP] + holo-[ACP] + CO2. Its pathway is lipid metabolism; mycolic acid biosynthesis. In terms of biological role, part of the mycobacterial fatty acid elongation system FAS-II, which is involved in mycolic acid biosynthesis. Catalyzes the elongation of long chain acyl-ACP substrates by the addition of two carbons from malonyl-ACP to an acyl acceptor. Involved in extension of the mycolate chains to full lengths and produces longer chain multiunsaturated hydrocarbons averaging 54 carbons in length. The protein is 3-oxoacyl-[acyl-carrier-protein] synthase 2 (kasB) of Mycobacterium leprae (strain TN).